Reading from the N-terminus, the 302-residue chain is Zygote arrest protein 2.S (302 aa).

Disordered regions lie at residues 15–46, 88–117, and 138–195; these read YGGN…SEPP, VDTG…PTDC, and LPQG…EPNK. Residues 159 to 178 show a composition bias toward basic and acidic residues; it reads LKDRGPSPEEKEPETKEALE. The 3CxxC-type zinc finger occupies 203–288; sequence QKYGYFHCKD…QELCGRCKNK (86 aa).

Belongs to the ZAR1 family. Oocyte-specific.

It localises to the cytoplasm. The protein localises to the cytoplasmic ribonucleoprotein granule. MRNA-binding protein required for maternal mRNA storage, translation and degradation during oocyte maturation. Probably promotes formation of some phase-separated membraneless compartment that stores maternal mRNAs in oocytes: acts by undergoing liquid-liquid phase separation upon binding to maternal mRNAs. Binds to the 3'-UTR of maternal mRNAs, inhibiting their translation. This is Zygote arrest protein 2.S from Xenopus laevis (African clawed frog).